The sequence spans 107 residues: Integration host factor subunit alpha (107 aa).

The protein belongs to the bacterial histone-like protein family. Heterodimer of an alpha and a beta chain.

This protein is one of the two subunits of integration host factor, a specific DNA-binding protein that functions in genetic recombination as well as in transcriptional and translational control. This chain is Integration host factor subunit alpha, found in Brucella abortus (strain S19).